The sequence spans 926 residues: Alanine--tRNA ligase (926 aa).

Zn(2+) contacts are provided by His577, His581, Cys680, and His684.

Belongs to the class-II aminoacyl-tRNA synthetase family. It depends on Zn(2+) as a cofactor.

Its subcellular location is the cytoplasm. It catalyses the reaction tRNA(Ala) + L-alanine + ATP = L-alanyl-tRNA(Ala) + AMP + diphosphate. Catalyzes the attachment of alanine to tRNA(Ala) in a two-step reaction: alanine is first activated by ATP to form Ala-AMP and then transferred to the acceptor end of tRNA(Ala). Also edits incorrectly charged Ser-tRNA(Ala) and Gly-tRNA(Ala) via its editing domain. This chain is Alanine--tRNA ligase, found in Methylacidiphilum infernorum (isolate V4) (Methylokorus infernorum (strain V4)).